Here is a 65-residue protein sequence, read N- to C-terminus: Hirudin-2B (65 aa).

The interaction with thrombin active site stretch occupies residues 1–3; the sequence is ITY. Disulfide bonds link cysteine 6–cysteine 14, cysteine 16–cysteine 28, and cysteine 22–cysteine 39. Residues 39-65 are disordered; the sequence is CVTGEGTPKPQSHNDGDFEEIPEEYLQ. Threonine 45 carries O-linked (GalNAc...) threonine glycosylation. The interval 55-65 is interaction with fibrinogen-binding exosite of thrombin; the sequence is DFEEIPEEYLQ. Positions 55 to 65 are enriched in acidic residues; it reads DFEEIPEEYLQ. Sulfotyrosine is present on tyrosine 63.

This sequence belongs to the protease inhibitor I14 (hirudin) family.

It is found in the secreted. Hirudin is a potent thrombin-specific protease inhibitor. It forms a stable non-covalent complex with alpha-thrombin, thereby abolishing its ability to cleave fibrinogen. The chain is Hirudin-2B from Hirudo medicinalis (Medicinal leech).